The following is a 462-amino-acid chain: Cysteine--tRNA ligase (462 aa).

C27 lines the Zn(2+) pocket. The 'HIGH' region signature appears at 29–39 (PTVYNYIHVGN). C209, H234, and E238 together coordinate Zn(2+). A 'KMSKS' region motif is present at residues 266–270 (KMSKS). K269 lines the ATP pocket.

Belongs to the class-I aminoacyl-tRNA synthetase family. Monomer. Requires Zn(2+) as cofactor.

It localises to the cytoplasm. It carries out the reaction tRNA(Cys) + L-cysteine + ATP = L-cysteinyl-tRNA(Cys) + AMP + diphosphate. This Finegoldia magna (strain ATCC 29328 / DSM 20472 / WAL 2508) (Peptostreptococcus magnus) protein is Cysteine--tRNA ligase.